The following is a 185-amino-acid chain: Anaphase-promoting complex subunit 10 (185 aa).

Residue threonine 2 is modified to N-acetylthreonine. The region spanning 2 to 185 (TTPNKTPPGA…IDFMMYRSIR (184 aa)) is the DOC domain. The residue at position 169 (lysine 169) is an N6-acetyllysine.

It belongs to the APC10 family. In terms of assembly, the mammalian APC/C is composed at least of 14 distinct subunits ANAPC1, ANAPC2, CDC27/APC3, ANAPC4, ANAPC5, CDC16/APC6, ANAPC7, CDC23/APC8, ANAPC10, ANAPC11, CDC26/APC12, ANAPC13, ANAPC15 and ANAPC16 that assemble into a complex of at least 19 chains with a combined molecular mass of around 1.2 MDa; APC/C interacts with FZR1 and FBXO5. The C-terminus of APC10 binds to CDC27/APC3. Interacts with PIWIL1; interaction only takes place when PIWIL1 binds piRNA. Interacts with FBXO43; the interaction is direct.

Its pathway is protein modification; protein ubiquitination. Functionally, component of the anaphase promoting complex/cyclosome (APC/C), a cell cycle-regulated E3 ubiquitin ligase that controls progression through mitosis and the G1 phase of the cell cycle. The APC/C complex acts by mediating ubiquitination and subsequent degradation of target proteins: it mainly mediates the formation of 'Lys-11'-linked polyubiquitin chains and, to a lower extent, the formation of 'Lys-48'- and 'Lys-63'-linked polyubiquitin chains. The APC/C complex catalyzes assembly of branched 'Lys-11'-/'Lys-48'-linked branched ubiquitin chains on target proteins. This is Anaphase-promoting complex subunit 10 (ANAPC10) from Homo sapiens (Human).